A 270-amino-acid polypeptide reads, in one-letter code: Myeloid leukemia factor 1 (270 aa).

Phosphoserine occurs at positions 6, 8, 32, and 34. The segment at 50–125 (RARNRMGHED…VGDEPPKVFQ (76 aa)) is interaction with COPS3. Disordered stretches follow at residues 127 to 148 (STQT…RDSD) and 221 to 247 (RSVA…AIEH). Basic and acidic residues predominate over residues 138 to 148 (KETRKALRDSD).

Belongs to the MLF family. Interacts with CENPU. Also interacts with NRBP1/MADM, YWHAZ/14-3-3-zeta and HNRPUL2/MANP. NRBP1 recruits a serine kinase which phosphorylates both itself and MLF1. Phosphorylated MLF1 then binds to YWHAZ and is retained in the cytoplasm. Retained in the nucleus by binding to HNRPUL2. Binds to COPS3/CSN3 which is required for suppression of COP1 and activation of p53. Post-translationally, phosphorylation is required for binding to YWHAZ.

Its subcellular location is the cytoplasm. It localises to the nucleus. The protein localises to the cell projection. It is found in the cilium. The protein resides in the cytoskeleton. Its subcellular location is the cilium basal body. Involved in lineage commitment of primary hemopoietic progenitors by restricting erythroid formation and enhancing myeloid formation. Interferes with erythropoietin-induced erythroid terminal differentiation by preventing cells from exiting the cell cycle through suppression of CDKN1B/p27Kip1 levels. Suppresses COP1 activity via CSN3 which activates p53 and induces cell cycle arrest. Binds DNA and affects the expression of a number of genes so may function as a transcription factor in the nucleus. This is Myeloid leukemia factor 1 (MLF1) from Bos taurus (Bovine).